Reading from the N-terminus, the 535-residue chain is T-complex protein 1 subunit beta (535 aa).

Alanine 2 carries the post-translational modification N-acetylalanine. The residue at position 3 (serine 3) is a Phosphoserine. The residue at position 13 (lysine 13) is an N6-acetyllysine. Residue glycine 44 participates in ADP binding. Glycine 44 contributes to the ATP binding site. Serine 60 carries the post-translational modification Phosphoserine. Aspartate 97 provides a ligand contact to Mg(2+). Glycine 98, threonine 99, threonine 100, and serine 101 together coordinate ADP. ATP is bound by residues glycine 98, threonine 99, and threonine 100. Lysine 154 carries the post-translational modification N6-acetyllysine. Serine 168 and serine 169 together coordinate ADP. Lysine 181 carries the N6-acetyllysine modification. A Glycyl lysine isopeptide (Lys-Gly) (interchain with G-Cter in SUMO2) cross-link involves residue lysine 248. Serine 260 carries the post-translational modification Phosphoserine. Position 261 is a phosphothreonine (threonine 261). ADP contacts are provided by glycine 410, glutamate 495, and lysine 500. Glutamate 495 and lysine 500 together coordinate ATP.

The protein belongs to the TCP-1 chaperonin family. Component of the chaperonin-containing T-complex (TRiC), a hexadecamer composed of two identical back-to-back stacked rings enclosing a protein folding chamber. Each ring is made up of eight different subunits: TCP1/CCT1, CCT2, CCT3, CCT4, CCT5, CCT6A/CCT6, CCT7, CCT8. Interacts with PACRG. Interacts with FLCN. Interacts with DLEC1. Interacts with SVEP1.

The protein localises to the cytoplasm. The enzyme catalyses ATP + H2O = ADP + phosphate + H(+). Functionally, component of the chaperonin-containing T-complex (TRiC), a molecular chaperone complex that assists the folding of actin, tubulin and other proteins upon ATP hydrolysis. The TRiC complex mediates the folding of WRAP53/TCAB1, thereby regulating telomere maintenance. As part of the TRiC complex may play a role in the assembly of BBSome, a complex involved in ciliogenesis regulating transports vesicles to the cilia. This Bos taurus (Bovine) protein is T-complex protein 1 subunit beta (CCT2).